We begin with the raw amino-acid sequence, 501 residues long: Cytochrome P450 2J6 (501 aa).

Cys447 is a binding site for heme.

It belongs to the cytochrome P450 family. Heme serves as cofactor.

It is found in the endoplasmic reticulum membrane. The protein resides in the microsome membrane. It carries out the reaction an organic molecule + reduced [NADPH--hemoprotein reductase] + O2 = an alcohol + oxidized [NADPH--hemoprotein reductase] + H2O + H(+). The polypeptide is Cytochrome P450 2J6 (Cyp2j6) (Mus musculus (Mouse)).